A 23-amino-acid chain; its full sequence is Alyteserin-1a (23 aa).

Asn-23 carries the post-translational modification Asparagine amide.

As to expression, expressed by the skin glands.

The protein resides in the secreted. The protein localises to the target cell membrane. Its function is as follows. Antibacterial peptide with amphipathic alpha-helical structure. Shows selective growth inhibitory activity against the Gram-negative bacteria E.coli (MIC=25 uM) Has a weak hemolytic activity against human erythrocytes (LC(50)&gt;100 uM). Is very weakly active against S.aureus (MIC=200 uM). The chain is Alyteserin-1a from Alytes obstetricans (Common midwife toad).